Here is a 533-residue protein sequence, read N- to C-terminus: Glucose-6-phosphate isomerase (533 aa).

The active-site Proton donor is glutamate 341. Catalysis depends on residues histidine 372 and lysine 501.

It belongs to the GPI family.

It localises to the cytoplasm. It carries out the reaction alpha-D-glucose 6-phosphate = beta-D-fructose 6-phosphate. It functions in the pathway carbohydrate biosynthesis; gluconeogenesis. Its pathway is carbohydrate degradation; glycolysis; D-glyceraldehyde 3-phosphate and glycerone phosphate from D-glucose: step 2/4. In terms of biological role, catalyzes the reversible isomerization of glucose-6-phosphate to fructose-6-phosphate. This is Glucose-6-phosphate isomerase from Cereibacter sphaeroides (strain ATCC 17029 / ATH 2.4.9) (Rhodobacter sphaeroides).